The chain runs to 99 residues: Small ribosomal subunit protein uS14m (99 aa).

The protein belongs to the universal ribosomal protein uS14 family.

The protein localises to the mitochondrion. The protein is Small ribosomal subunit protein uS14m (RPS14) of Marchantia polymorpha (Common liverwort).